We begin with the raw amino-acid sequence, 339 residues long: D-erythrose-4-phosphate dehydrogenase (339 aa).

An NAD(+)-binding site is contributed by 11-12 (RI). Substrate-binding positions include 153–155 (SCT), arginine 199, 212–213 (TK), and arginine 235. The active-site Nucleophile is the cysteine 154. An NAD(+)-binding site is contributed by asparagine 317.

This sequence belongs to the glyceraldehyde-3-phosphate dehydrogenase family. Epd subfamily. In terms of assembly, homotetramer.

The protein localises to the cytoplasm. The catalysed reaction is D-erythrose 4-phosphate + NAD(+) + H2O = 4-phospho-D-erythronate + NADH + 2 H(+). It functions in the pathway cofactor biosynthesis; pyridoxine 5'-phosphate biosynthesis; pyridoxine 5'-phosphate from D-erythrose 4-phosphate: step 1/5. Its function is as follows. Catalyzes the NAD-dependent conversion of D-erythrose 4-phosphate to 4-phosphoerythronate. This chain is D-erythrose-4-phosphate dehydrogenase, found in Shewanella frigidimarina (strain NCIMB 400).